We begin with the raw amino-acid sequence, 178 residues long: Caveolin-1 (178 aa).

S2 is subject to N-acetylserine. Phosphoserine is present on S2. Positions 2–94 (SGGKYVDSEG…WKASFTTFTV (93 aa)) are required for homooligomerization. Residues 2–104 (SGGKYVDSEG…TKYWFYRLLS (103 aa)) lie on the Cytoplasmic side of the membrane. An N6-acetyllysine; alternate modification is found at K5. K5 is covalently cross-linked (Glycyl lysine isopeptide (Lys-Gly) (interchain with G-Cter in ubiquitin); alternate). Residue Y6 is modified to Phosphotyrosine. Phosphoserine is present on S9. Y14 is modified (phosphotyrosine; by ABL1). Y25 carries the post-translational modification Phosphotyrosine. Residues K26 and K30 each participate in a glycyl lysine isopeptide (Lys-Gly) (interchain with G-Cter in ubiquitin) cross-link. Position 37 is a phosphoserine (S37). Glycyl lysine isopeptide (Lys-Gly) (interchain with G-Cter in ubiquitin) cross-links involve residues K39, K47, and K57. Residues 82-94 (DGIWKASFTTFTV) form an interaction with CAVIN3 region. The helical intramembrane region spans 105–125 (ALFGIPMALIWGIYFAILSFL). At 126-178 (HIWAVVPCIKSFLIEIQCISRVYSIYIHTVCDPLFEAIGKIFSNVRIGLQKEI) the chain is on the cytoplasmic side. Residues 131 to 142 (VPCIKSFLIEIQ) are interacts with SPRY1, SPRY2, SPRY3 and SPRY4. Residues C133, C143, and C156 are each lipidated (S-palmitoyl cysteine). Residues 149 to 160 (SIYIHTVCDPLF) form an interacts with SPRY1, SPRY2, and SPRY4 region. The segment at 167–178 (FSNVRIGLQKEI) is interacts with SPRY1, SPRY2, SPRY3 and SPRY4.

This sequence belongs to the caveolin family. In terms of assembly, homooligomer. Interacts with GLIPR2. Interacts with NOSTRIN. Interacts with SNAP25 and STX1A. Interacts (via the N-terminus) with DPP4; the interaction is direct. Interacts with CTNNB1, CDH1 and JUP. Interacts with PACSIN2; this interaction induces membrane tubulation. Interacts with SLC7A9. Interacts with BMX and BTK. Interacts with TGFBR1. Interacts with CAVIN3 (via leucine-zipper domain) in a cholesterol-sensitive manner. Interacts with CAVIN1. Interacts with EHD2 in a cholesterol-dependent manner. Forms a ternary complex with UBXN6 and VCP; mediates CAV1 targeting to lysosomes for degradation. Interacts with ABCG1; this interaction regulates ABCG1-mediated cholesterol efflux. Interacts with NEU3; this interaction enhances NEU3 sialidase activity within caveola. Interacts (via C-terminus) with SPRY1, SPRY2 (via C-terminus), SPRY3, and SPRY4. Interacts with IGFBP5; this interaction allows trafficking of IGFBP5 from the plasma membrane to the nucleus. Post-translationally, phosphorylated at Tyr-14 by ABL1 in response to oxidative stress. Ubiquitinated. Undergo monoubiquitination and multi- and/or polyubiquitination. Monoubiquitination of N-terminal lysines promotes integration in a ternary complex with UBXN6 and VCP which promotes oligomeric CAV1 targeting to lysosomes for degradation. Ubiquitinated by ZNRF1; leading to degradation and modulation of the TLR4-mediated immune response.

The protein localises to the golgi apparatus membrane. Its subcellular location is the cell membrane. It localises to the membrane. It is found in the caveola. The protein resides in the membrane raft. Its function is as follows. May act as a scaffolding protein within caveolar membranes. Forms a stable heterooligomeric complex with CAV2 that targets to lipid rafts and drives caveolae formation. Mediates the recruitment of CAVIN proteins (CAVIN1/2/3/4) to the caveolae. Interacts directly with G-protein alpha subunits and can functionally regulate their activity. Involved in the costimulatory signal essential for T-cell receptor (TCR)-mediated T-cell activation. Its binding to DPP4 induces T-cell proliferation and NF-kappa-B activation in a T-cell receptor/CD3-dependent manner. Recruits CTNNB1 to caveolar membranes and may regulate CTNNB1-mediated signaling through the Wnt pathway. Negatively regulates TGFB1-mediated activation of SMAD2/3 by mediating the internalization of TGFBR1 from membrane rafts leading to its subsequent degradation. Binds 20(S)-hydroxycholesterol (20(S)-OHC). This chain is Caveolin-1 (CAV1), found in Saimiri boliviensis boliviensis (Bolivian squirrel monkey).